The chain runs to 413 residues: 2,3-diketo-5-methylthiopentyl-1-phosphate enolase (413 aa).

K98 serves as the catalytic Proton acceptor. Residues K147, 173–176, H264, G337, and 359–360 contribute to the substrate site; these read KDDE and GG. 3 residues coordinate Mg(2+): K173, D175, and E176. An N6-carboxylysine modification is found at K173.

This sequence belongs to the RuBisCO large chain family. Type IV subfamily. In terms of assembly, homodimer. Requires Mg(2+) as cofactor.

It carries out the reaction 5-methylsulfanyl-2,3-dioxopentyl phosphate = 2-hydroxy-5-methylsulfanyl-3-oxopent-1-enyl phosphate. Its pathway is amino-acid biosynthesis; L-methionine biosynthesis via salvage pathway; L-methionine from S-methyl-5-thio-alpha-D-ribose 1-phosphate: step 3/6. Functionally, catalyzes the enolization of 2,3-diketo-5-methylthiopentyl-1-phosphate (DK-MTP-1-P) into 2-hydroxy-3-keto-5-methylthiopentenyl-1-phosphate (HK-MTPenyl-1-P). The chain is 2,3-diketo-5-methylthiopentyl-1-phosphate enolase (mtnW) from Geobacillus kaustophilus (strain HTA426).